Reading from the N-terminus, the 178-residue chain is Large ribosomal subunit protein uL6 (178 aa).

It belongs to the universal ribosomal protein uL6 family. As to quaternary structure, part of the 50S ribosomal subunit.

This protein binds to the 23S rRNA, and is important in its secondary structure. It is located near the subunit interface in the base of the L7/L12 stalk, and near the tRNA binding site of the peptidyltransferase center. This is Large ribosomal subunit protein uL6 from Opitutus terrae (strain DSM 11246 / JCM 15787 / PB90-1).